The primary structure comprises 500 residues: Lysine--tRNA ligase (500 aa).

Mg(2+)-binding residues include glutamate 410 and glutamate 417.

The protein belongs to the class-II aminoacyl-tRNA synthetase family. As to quaternary structure, homodimer. It depends on Mg(2+) as a cofactor.

Its subcellular location is the cytoplasm. The enzyme catalyses tRNA(Lys) + L-lysine + ATP = L-lysyl-tRNA(Lys) + AMP + diphosphate. The polypeptide is Lysine--tRNA ligase (Shewanella baltica (strain OS155 / ATCC BAA-1091)).